We begin with the raw amino-acid sequence, 379 residues long: (R)-2-hydroxyglutaryl-CoA dehydratase, subunit beta (379 aa).

This sequence belongs to the FldB/FldC dehydratase alpha/beta subunit family. The (R)-2-hydroxyglutaryl-CoA dehydratase enzyme system is a heterodimer composed of an alpha subunit (HgdA) and a beta subunit (HgdB). [4Fe-4S] cluster serves as cofactor. FMN is required as a cofactor. It depends on Mg(2+) as a cofactor.

It is found in the cytoplasm. The enzyme catalyses (R)-2-hydroxyglutaryl-CoA = (2E)-glutaconyl-CoA + H2O. It participates in amino-acid degradation; L-glutamate degradation via hydroxyglutarate pathway; crotonoyl-CoA from L-glutamate: step 4/5. Its activity is regulated as follows. Activated by the HgdC. Reversibly inactivated by oxidants such as 2-nitrophenol, 3-nitrophenol, 4-nitrophenol, 4-nitrobenzoate, carbonyl cyanide 4-(trifluoromethoxy)phenylhydrazone (FCCP) and chloramphenicol. Irreversibly inactivated by oxidants such as hydroxylamine and nitrite. Involved in the fermentation of L-glutamate via the hydroxyglutarate pathway. Catalyzes the reversible syn-elimination of water from (R)-2-hydroxyglutaryl-CoA to yield (E)-glutaconyl-CoA. The dehydration mechanism involves a transient one electron reduction of the thioester from (R)-2-hydroxyglutaryl-CoA, generating a ketyl radical. Prior to (E)-glutaconyl-CoA formation, the ketyl radical is subsequently reoxidized by electron transfer back to the HgdA-HgdB complex (CompD) to avoid change in oxidation state of the substrate. The appropriate redox state of dehydratase HgdA-HgdB complex (CompD) is maintained by HgdC (CompA) via hydrolysis of ATP and ATP-dependent electron transfer. Since the electron is recycled, the dehydratase is able to perform several turnovers with only catalytic amounts of ATP and substoichiometric amounts of HgdC (CompA). This Acidaminococcus fermentans (strain ATCC 25085 / DSM 20731 / CCUG 9996 / CIP 106432 / VR4) protein is (R)-2-hydroxyglutaryl-CoA dehydratase, subunit beta.